Here is a 184-residue protein sequence, read N- to C-terminus: ATP synthase subunit b, chloroplastic (184 aa).

The helical transmembrane segment at 27-49 threads the bilayer; that stretch reads LATNPINLSVVLGVLIFFGKGVL.

The protein belongs to the ATPase B chain family. As to quaternary structure, F-type ATPases have 2 components, F(1) - the catalytic core - and F(0) - the membrane proton channel. F(1) has five subunits: alpha(3), beta(3), gamma(1), delta(1), epsilon(1). F(0) has four main subunits: a(1), b(1), b'(1) and c(10-14). The alpha and beta chains form an alternating ring which encloses part of the gamma chain. F(1) is attached to F(0) by a central stalk formed by the gamma and epsilon chains, while a peripheral stalk is formed by the delta, b and b' chains.

It localises to the plastid. It is found in the chloroplast thylakoid membrane. In terms of biological role, f(1)F(0) ATP synthase produces ATP from ADP in the presence of a proton or sodium gradient. F-type ATPases consist of two structural domains, F(1) containing the extramembraneous catalytic core and F(0) containing the membrane proton channel, linked together by a central stalk and a peripheral stalk. During catalysis, ATP synthesis in the catalytic domain of F(1) is coupled via a rotary mechanism of the central stalk subunits to proton translocation. Component of the F(0) channel, it forms part of the peripheral stalk, linking F(1) to F(0). The chain is ATP synthase subunit b, chloroplastic from Carica papaya (Papaya).